Reading from the N-terminus, the 178-residue chain is MSRIGNKVIVLPAGVELANNDNVVTVKGPKGELTREFSKDIEIRVEGTEVTLHRPNDSKEMKTIHGTTRALLNNMVVGVSEGFKKELEMRGVGYRAQLQGSKLVLAVGKSHPDEVEAPEGITFELPNPTTIVVSGISKEVVGQTAAYVRSLRSPEPYKGKGIRYVGEFVRRKEGKTGK.

This sequence belongs to the universal ribosomal protein uL6 family. As to quaternary structure, part of the 50S ribosomal subunit.

Functionally, this protein binds to the 23S rRNA, and is important in its secondary structure. It is located near the subunit interface in the base of the L7/L12 stalk, and near the tRNA binding site of the peptidyltransferase center. This is Large ribosomal subunit protein uL6 from Streptococcus pneumoniae (strain JJA).